A 2372-amino-acid polypeptide reads, in one-letter code: NBAS subunit of NRZ tethering complex (2372 aa).

WD repeat units lie at residues 119–158 and 304–343; these read DPNP…LFII and GEQD…LRGS. A disordered region spans residues 447–468; that stretch reads LESSVKGEEDDGDDDSDSDEEA. A compositionally biased stretch (acidic residues) spans 454-467; the sequence is EEDDGDDDSDSDEE. Residues 629–668 are a coiled coil; that stretch reads YEDFLSMEEELEQRKERESKKRQELLKKVDFSKLTLEQKE.

The protein localises to the endoplasmic reticulum. In terms of biological role, involved in Golgi-to-endoplasmic reticulum (ER) retrograde transport; the function is proposed to depend on its association in the NRZ complex which is believed to play a role in SNARE assembly at the ER. Required for normal embryonic development. May play a role in the nonsense-mediated decay pathway of mRNAs containing premature stop codons. The sequence is that of NBAS subunit of NRZ tethering complex from Danio rerio (Zebrafish).